The chain runs to 379 residues: Alanine racemase (379 aa).

K37 (proton acceptor; specific for D-alanine) is an active-site residue. At K37 the chain carries N6-(pyridoxal phosphate)lysine. Substrate is bound at residue R137. Y269 serves as the catalytic Proton acceptor; specific for L-alanine. M317 is a substrate binding site.

The protein belongs to the alanine racemase family. Requires pyridoxal 5'-phosphate as cofactor.

The catalysed reaction is L-alanine = D-alanine. Its pathway is amino-acid biosynthesis; D-alanine biosynthesis; D-alanine from L-alanine: step 1/1. Functionally, catalyzes the interconversion of L-alanine and D-alanine. May also act on other amino acids. This chain is Alanine racemase (alr), found in Citrifermentans bemidjiense (strain ATCC BAA-1014 / DSM 16622 / JCM 12645 / Bem) (Geobacter bemidjiensis).